The sequence spans 416 residues: Trehalose synthase (416 aa).

The protein belongs to the glycosyltransferase group 1 family. Glycosyltransferase 4 subfamily. In terms of assembly, homodimer. Mg(2+) serves as cofactor.

The catalysed reaction is an NDP-alpha-D-glucose + D-glucose = alpha,alpha-trehalose + a ribonucleoside 5'-diphosphate + H(+). Its activity is regulated as follows. Inhibited by 20 mM Fe(3+) and Mn(2+). Partially inhibited by Zn(2+) and Ni(2+). Activity is slightly enhanced by 2 mM Fe (3+), Mn (2+), Ca(2+) or Li(+) and by 20 mM Mg(2+), Ca(2+) or Li(+). Its function is as follows. Synthesizes trehalose from ADP-glucose and glucose. The reaction is reversible, the equilibrium strongly favors trehalose synthesis. This is Trehalose synthase from Rubrobacter xylanophilus (strain DSM 9941 / JCM 11954 / NBRC 16129 / PRD-1).